A 362-amino-acid chain; its full sequence is Transcription factor bHLH133 (362 aa).

One can recognise a bHLH domain in the interval 209-258 (LQVPSSQSTLKVRKEKLGGRIASLHQLVSPFGKTDTASVLSEAIGYIRFL).

Belongs to the bHLH protein family. As to quaternary structure, homodimer.

The protein localises to the nucleus. This is Transcription factor bHLH133 (BHLH133) from Arabidopsis thaliana (Mouse-ear cress).